We begin with the raw amino-acid sequence, 297 residues long: MNLGTLVSETRNPQTMDLDALPTPELVKRFNEQDTLVAEAVKATLPDVARAVDAAAAALKSGGRIIYMGAGTSGRLGVLDASECPPTFGVPHGLVVGLIAGGPGALLKAVEGAEDCQQAGEDDLVALNLQEQDLVVGLAASGRTPYVIGGLRYARQSGCTTVAVSCNPDSPIAREANIAISPVVGPEALTGSTRLKSGTAQKMVLNMISTGAMVKFGKVYQNLMVDMKATNVKLVDRACRMVVEATGIGREEAEALLKQTDFEVKPAILMALTGLDAAAAREKLAAHQGFLRAALEH.

Residues 55–218 (AAAALKSGGR…STGAMVKFGK (164 aa)) form the SIS domain. E83 (proton donor) is an active-site residue. The active site involves E114.

The protein belongs to the GCKR-like family. MurNAc-6-P etherase subfamily. Homodimer.

It carries out the reaction N-acetyl-D-muramate 6-phosphate + H2O = N-acetyl-D-glucosamine 6-phosphate + (R)-lactate. It participates in amino-sugar metabolism; 1,6-anhydro-N-acetylmuramate degradation. The protein operates within amino-sugar metabolism; N-acetylmuramate degradation. It functions in the pathway cell wall biogenesis; peptidoglycan recycling. Its function is as follows. Specifically catalyzes the cleavage of the D-lactyl ether substituent of MurNAc 6-phosphate, producing GlcNAc 6-phosphate and D-lactate. Together with AnmK, is also required for the utilization of anhydro-N-acetylmuramic acid (anhMurNAc) either imported from the medium or derived from its own cell wall murein, and thus plays a role in cell wall recycling. This is N-acetylmuramic acid 6-phosphate etherase from Salmonella paratyphi B (strain ATCC BAA-1250 / SPB7).